Consider the following 422-residue polypeptide: Probable cell wall mannoprotein PIR32 (422 aa).

A signal peptide spans 1–21 (MIHYLIFPILLIFFQIIKSSG). Disordered regions lie at residues 116-143 (DGQVQKMKHKHDYSSGGGDDDDDDEDCF) and 155-313 (DYQD…EGYE). The span at 133–143 (GDDDDDDEDCF) shows a compositional bias: acidic residues. Polar residues predominate over residues 158–169 (DMNTQEQANEDS). The stretch at 179–214 (HQQVVDQNQQINEEEEETQEQQMQEENNNTNEIEDN) forms a coiled coil. 2 stretches are compositionally biased toward low complexity: residues 180–189 (QQVVDQNQQI) and 198–209 (EQQMQEENNNTN). The N-linked (GlcNAc...) asparagine glycan is linked to asparagine 206. A compositionally biased stretch (acidic residues) spans 220–231 (ETIEEIYDDIDN). N-linked (GlcNAc...) asparagine glycosylation is found at asparagine 232 and asparagine 237. The segment covering 238-248 (NSKKYHKKRPH) has biased composition (basic residues). Composition is skewed to basic and acidic residues over residues 249–284 (NNYENKHGHKDYHEDHHHNHRYKDHENGHEEDDHKW) and 300–311 (QEQKPKHEKSEG). Asparagine 328 carries N-linked (GlcNAc...) asparagine glycosylation.

It belongs to the PIR protein family. In terms of processing, O-glycosylated. Extensively O-mannosylated.

The protein localises to the secreted. Its subcellular location is the cell wall. In terms of biological role, probable structural component of the cell wall involved in cell wall integrity and virulence. This is Probable cell wall mannoprotein PIR32 (PIR32) from Candida albicans (strain SC5314 / ATCC MYA-2876) (Yeast).